The following is a 964-amino-acid chain: MATRSLEKLASIDAQLRALVPGKVSEDDKLVEYDALLLDRFLDILQDLHGEDLKETVQECYELSAEYEGKHDPKKLEELGNVLTSLDPGDSIVIAKAFSHMLNLANLAEEVQIAYRRRQKLKRGDFADENNATTESDIEETFKKLVGDLKKSPQEVFDALKNQTVDLVLTAHPTQSVRRSLLQKHGRIRDCLAQLYAKDITPDDKQELDEALQREIQAAFRTDEIRRTAPTPQDEMRAGMSYFHETIWKGVPKFLRRVDTALKNIGINERLPYNAPLIQFSSWMGGDRDGNPRVTLEVTRDVCLLARMMAANLYYSQIEELMFELSMWRCNDDLRIRAAELYRSSRRDTKHYIEFWKTIPPSEPYRVILGDVRDKLYQTRERTRQMLAHGISDIPEDATYNNVEQFLEPLELCYRSLCECGDRPIADGSLLDFLRQVSTFGLSFVRLDIRQESDRHTDVLDAITQHLEIGSYREWSEERRQEWLLSELSGKRPLFGPDLPRTEEIADVLDTLHVIAELPSDCFGAYIISMATAPSDVLAVELLQRECHVKQPLRVVPLFEKLDDLESASAAVARLFSIEWYRNRINGKQEVMVGYSDSGKDAGRFSAAWQLYKAQEELIKVAKEHGVKLTMFHGRGGTVGRGGGPTHLAILSQPPDTIQGSLRVTVQGEVIEQSFGEEHLCFRTLQRFTAATLEHGMHPPVSPKPEWRALMDEIAVIATEKYRSIVFKEPRFVEYSALATPELEYGRMNIGSRPSKRKPSGGIESLRAIPWIFAWTQTRFHLPVWLGFGAAFKYAIDKDIKNLRMFHEMYNEWPFFRVTIDLVEMVFAKGNPGIAALYDKLLVSEDLLPFGELLRSNYEETRSLLLQIAGHKDLLEGDPYLKQRLRLRDSYITTLNLLQAYTLKRIRDPNYHVTLRPHISKDYMESKSAAELVQLNPTSEYAPGLEDTLILTMKGIAAGLQNTG.

At Ser11 the chain carries Phosphoserine. Residues His172 and Lys600 contribute to the active site.

Belongs to the PEPCase type 1 family. Homotetramer. Mg(2+) serves as cofactor.

It is found in the cytoplasm. It catalyses the reaction oxaloacetate + phosphate = phosphoenolpyruvate + hydrogencarbonate. It functions in the pathway photosynthesis; C4 acid pathway. Its activity is regulated as follows. By light-reversible phosphorylation. Through the carboxylation of phosphoenolpyruvate (PEP) it forms oxaloacetate, a four-carbon dicarboxylic acid source for the tricarboxylic acid cycle. The protein is Phosphoenolpyruvate carboxylase (PPC) of Nicotiana tabacum (Common tobacco).